We begin with the raw amino-acid sequence, 313 residues long: Methionyl-tRNA formyltransferase (313 aa).

The tract at residues 32 to 51 is disordered; sequence QPDRRKGRGKELQPPPAKRK. Position 109-112 (109-112) interacts with (6S)-5,6,7,8-tetrahydrofolate; that stretch reads SLLP.

The protein belongs to the Fmt family.

It catalyses the reaction L-methionyl-tRNA(fMet) + (6R)-10-formyltetrahydrofolate = N-formyl-L-methionyl-tRNA(fMet) + (6S)-5,6,7,8-tetrahydrofolate + H(+). Its function is as follows. Attaches a formyl group to the free amino group of methionyl-tRNA(fMet). The formyl group appears to play a dual role in the initiator identity of N-formylmethionyl-tRNA by promoting its recognition by IF2 and preventing the misappropriation of this tRNA by the elongation apparatus. In Natranaerobius thermophilus (strain ATCC BAA-1301 / DSM 18059 / JW/NM-WN-LF), this protein is Methionyl-tRNA formyltransferase.